A 137-amino-acid polypeptide reads, in one-letter code: BolA-like protein 1 (137 aa).

Ser-81 is modified (phosphoserine). The disordered stretch occupies residues 114 to 137 (WGENSQLDTSPPCLGGNKKTLGTP).

The protein belongs to the BolA/IbaG family. As to quaternary structure, interacts with GLRX5.

It is found in the mitochondrion. Functionally, acts as a mitochondrial iron-sulfur (Fe-S) cluster assembly factor that facilitates (Fe-S) cluster insertion into a subset of mitochondrial proteins. Probably acts together with the monothiol glutaredoxin GLRX5. May protect cells against oxidative stress. The polypeptide is BolA-like protein 1 (BOLA1) (Pongo abelii (Sumatran orangutan)).